We begin with the raw amino-acid sequence, 335 residues long: MAKAKIAVNGYGTIGKRVADAAQAQDDMEIIGISKTKPNYEAAVAHQLGYDIYAPAANLEAFEKAGMPAAGSIEEMVEKADVIVDCTPGGIGKSNKALYEKAGVKAIWQGGEDHELAGYSFNAVANYEGALGLDFVRVVSCNTTGLCRVIYPIDKAFGTKKVRVTLARRATDPNDIKKGPINAIVPDPIKLPSHHGPDVKTVIPHIDITSAAMKIPTTLMHVHTVNMELKNECTAEDVRQVLGSQSRVRFVGQGITSTAEIMEVARDIKRPRNDMWENCVWPDSITMHEGELYFFQAIHQESIVVPENVDAIRAMMELESDGAKSILKTNKAIGL.

Residues 13-14 (TI) and G111 each bind NAD(+). 140–142 (SCN) contributes to the D-glyceraldehyde 3-phosphate binding site. Residue C141 is the Nucleophile of the active site. R169 serves as a coordination point for NAD(+). D-glyceraldehyde 3-phosphate is bound by residues T171 and 195 to 196 (HG). Q300 lines the NAD(+) pocket.

Belongs to the glyceraldehyde-3-phosphate dehydrogenase family. In terms of assembly, homotetramer.

It is found in the cytoplasm. It carries out the reaction D-glyceraldehyde 3-phosphate + phosphate + NADP(+) = (2R)-3-phospho-glyceroyl phosphate + NADPH + H(+). The enzyme catalyses D-glyceraldehyde 3-phosphate + phosphate + NAD(+) = (2R)-3-phospho-glyceroyl phosphate + NADH + H(+). The protein operates within carbohydrate degradation; glycolysis; pyruvate from D-glyceraldehyde 3-phosphate: step 1/5. This Methanosarcina acetivorans (strain ATCC 35395 / DSM 2834 / JCM 12185 / C2A) protein is Glyceraldehyde-3-phosphate dehydrogenase 2 (gapB).